An 873-amino-acid chain; its full sequence is Leucine--tRNA ligase (873 aa).

The 'HIGH' region signature appears at 43-53 (PYPSGSLHMGH). Residues 624–628 (TMSKS) carry the 'KMSKS' region motif. Lys627 lines the ATP pocket.

This sequence belongs to the class-I aminoacyl-tRNA synthetase family.

The protein resides in the cytoplasm. It catalyses the reaction tRNA(Leu) + L-leucine + ATP = L-leucyl-tRNA(Leu) + AMP + diphosphate. The chain is Leucine--tRNA ligase from Synechococcus sp. (strain JA-3-3Ab) (Cyanobacteria bacterium Yellowstone A-Prime).